The primary structure comprises 177 residues: ATP-dependent protease subunit HslV (177 aa).

Thr6 is a catalytic residue. Na(+) is bound by residues Ser162, Cys165, and Thr168.

This sequence belongs to the peptidase T1B family. HslV subfamily. A double ring-shaped homohexamer of HslV is capped on each side by a ring-shaped HslU homohexamer. The assembly of the HslU/HslV complex is dependent on binding of ATP.

Its subcellular location is the cytoplasm. It catalyses the reaction ATP-dependent cleavage of peptide bonds with broad specificity.. Allosterically activated by HslU binding. Its function is as follows. Protease subunit of a proteasome-like degradation complex believed to be a general protein degrading machinery. The chain is ATP-dependent protease subunit HslV from Desulforudis audaxviator (strain MP104C).